The chain runs to 132 residues: Small ribosomal subunit protein uS8 (132 aa).

Belongs to the universal ribosomal protein uS8 family. As to quaternary structure, part of the 30S ribosomal subunit. Contacts proteins S5 and S12.

In terms of biological role, one of the primary rRNA binding proteins, it binds directly to 16S rRNA central domain where it helps coordinate assembly of the platform of the 30S subunit. The sequence is that of Small ribosomal subunit protein uS8 from Bacillus anthracis (strain A0248).